The primary structure comprises 489 residues: Mitogen-activated protein kinase adapter protein MST50 (489 aa).

The segment at 1–56 is disordered; it reads MSFNTGTAYAESDADDEYERDIHDSSPIDATDAEASPTESDPPSNEHTPTTYGYRS. A compositionally biased stretch (polar residues) spans 37–54; the sequence is PTESDPPSNEHTPTTYGY. Residues 69–132 form the SAM domain; that stretch reads WTADECADFI…LRSVYDVKKA (64 aa). 2 disordered regions span residues 207–285 and 309–379; these read PLPH…AAER and SINI…GSNA. 2 stretches are compositionally biased toward polar residues: residues 256 to 265 and 328 to 346; these read PKATSPTHLQ and ASRSYRSDQPTPSSRSTFA. Residues 377-457 form the Ras-associating domain; it reads SNASVEIFKS…PMFMLRKTNN (81 aa).

In terms of assembly, interacts with MST7 and MST11. Interacts with MCK1, MKK2 and HIK1.

Functionally, mitogen-activated protein kinase adapter protein; part of the MST11-MST7-PMK1 MAP kinase (MAPK) cascade that is essential for appressorium formation, penetration and invasive growth. Binds to the MAPKKK MST11 and the MAPKK MST7 to maintain the stability of the MST11-MST7 complex for the phosphorylation of the MAPK PMK1. Is also involved in the MPS1 and OSM1 MAPK pathways, and especially plays a role in the activation of MPS1 in response to cell wall stress. Its function differs in the 3 MAPK pathways. The chain is Mitogen-activated protein kinase adapter protein MST50 from Pyricularia oryzae (strain 70-15 / ATCC MYA-4617 / FGSC 8958) (Rice blast fungus).